Here is a 520-residue protein sequence, read N- to C-terminus: Ribonuclease Y (520 aa).

The chain crosses the membrane as a helical span at residues 4-24 (VSGILLVLIGLLAGVGLGVLL). Residues 210–270 (TVSVVNLPNE…VRREVARVSL (61 aa)) form the KH domain. One can recognise an HD domain in the interval 336-429 (VLQHSREVAF…VQAADALSGA (94 aa)).

Belongs to the RNase Y family.

The protein resides in the cell membrane. In terms of biological role, endoribonuclease that initiates mRNA decay. The sequence is that of Ribonuclease Y from Syntrophobacter fumaroxidans (strain DSM 10017 / MPOB).